Here is a 208-residue protein sequence, read N- to C-terminus: Imidazole glycerol phosphate synthase subunit HisH (208 aa).

The Glutamine amidotransferase type-1 domain maps to 2-208 (NVTIVDYNSG…LKIIENFLNL (207 aa)). Residue Cys-85 is the Nucleophile of the active site. Residues His-190 and Glu-192 contribute to the active site.

In terms of assembly, heterodimer of HisH and HisF.

The protein resides in the cytoplasm. The enzyme catalyses 5-[(5-phospho-1-deoxy-D-ribulos-1-ylimino)methylamino]-1-(5-phospho-beta-D-ribosyl)imidazole-4-carboxamide + L-glutamine = D-erythro-1-(imidazol-4-yl)glycerol 3-phosphate + 5-amino-1-(5-phospho-beta-D-ribosyl)imidazole-4-carboxamide + L-glutamate + H(+). The catalysed reaction is L-glutamine + H2O = L-glutamate + NH4(+). It participates in amino-acid biosynthesis; L-histidine biosynthesis; L-histidine from 5-phospho-alpha-D-ribose 1-diphosphate: step 5/9. In terms of biological role, IGPS catalyzes the conversion of PRFAR and glutamine to IGP, AICAR and glutamate. The HisH subunit catalyzes the hydrolysis of glutamine to glutamate and ammonia as part of the synthesis of IGP and AICAR. The resulting ammonia molecule is channeled to the active site of HisF. This Pelagibacter ubique (strain HTCC1062) protein is Imidazole glycerol phosphate synthase subunit HisH.